The chain runs to 177 residues: FCS-Like Zinc finger 1 (177 aa).

Residues 22 to 46 (SLSEMEAGFSGNNNNSNNHGNPQNG) show a composition bias toward low complexity. 2 disordered regions span residues 22–49 (SLSEMEAGFSGNNNNSNNHGNPQNGVVS) and 134–177 (ERDE…VAAA). The segment at 96-140 (HFLDSCFLCKKPLGDNRDIYMYRGDTPFCSEECRQEQIERDEAKE) adopts an FLZ-type zinc-finger fold. Composition is skewed to basic and acidic residues over residues 134–143 (ERDEAKEKKQ) and 154–168 (RRKEQSSPTRSRDYA).

It belongs to the FLZ family. Interacts with KIN10 and KIN11 via its FLZ-type zinc finger domain. Interacts with KINB1, KINB2 and KINB3 via its N-terminal part. Interacts with DSP3 and BBX21 via its FLZ-type zinc finger domain. Forms heterodimer with FLZ7 and FLZ15 in vitro.

It is found in the nucleus. The protein localises to the cytoplasm. May act as an adapter to facilitate the interaction of SnRK1 complex with effector proteins, conferring tissue- and stimulus-type specific differences in the SnRK1 regulation pathway. This chain is FCS-Like Zinc finger 1, found in Arabidopsis thaliana (Mouse-ear cress).